The following is a 274-amino-acid chain: AIMKMDGSQQEENLEVISTGSLGLDLALGVGGLPRGRIVEIFGPESSGKTTLCLEAVAQCQKNGGVCAFVDAEHAFDPVYARKLGVKVEELYLSQPDTGEQALEICDTLVRSGGIDMVVVDSVAALVPKAEIEGDMGDSHVGLQARLMSQALRKLTGHIKKTNTLVVFINQIRMKIGVMFGSPETTTGGNALKFYSSVRLDIRRTGSIKKGEEVLGNETRVKVIKNKVAPPFRQAEFDILYGEGISWEGELIDIGVKNDIINKSGAWYSYNGAK.

Position 43–50 (43–50) interacts with ATP; sequence GPESSGKT.

It belongs to the RecA family.

It localises to the cytoplasm. Can catalyze the hydrolysis of ATP in the presence of single-stranded DNA, the ATP-dependent uptake of single-stranded DNA by duplex DNA, and the ATP-dependent hybridization of homologous single-stranded DNAs. It interacts with LexA causing its activation and leading to its autocatalytic cleavage. This chain is Protein RecA, found in Neisseria polysaccharea.